A 390-amino-acid chain; its full sequence is Dihydroorotase (390 aa).

Zn(2+) contacts are provided by histidine 54 and histidine 56. Residues 56-58 (HIR) and asparagine 88 each bind substrate. Zn(2+)-binding residues include lysine 136, histidine 160, histidine 197, and aspartate 259. Position 136 is an N6-carboxylysine (lysine 136). Residue aspartate 259 is part of the active site. Residues histidine 263 and 277-278 (PG) each bind substrate.

The protein belongs to the metallo-dependent hydrolases superfamily. DHOase family. Class I DHOase subfamily. It depends on Zn(2+) as a cofactor.

It carries out the reaction (S)-dihydroorotate + H2O = N-carbamoyl-L-aspartate + H(+). It functions in the pathway pyrimidine metabolism; UMP biosynthesis via de novo pathway; (S)-dihydroorotate from bicarbonate: step 3/3. Its function is as follows. Catalyzes the reversible cyclization of carbamoyl aspartate to dihydroorotate. The protein is Dihydroorotase of Saccharolobus solfataricus (strain ATCC 35092 / DSM 1617 / JCM 11322 / P2) (Sulfolobus solfataricus).